The sequence spans 99 residues: Large ribosomal subunit protein bL27 (99 aa).

The propeptide occupies methionine 1 to phenylalanine 10.

It belongs to the bacterial ribosomal protein bL27 family. In terms of processing, the N-terminus is cleaved by ribosomal processing cysteine protease Prp.

In Caldicellulosiruptor bescii (strain ATCC BAA-1888 / DSM 6725 / KCTC 15123 / Z-1320) (Anaerocellum thermophilum), this protein is Large ribosomal subunit protein bL27.